We begin with the raw amino-acid sequence, 208 residues long: Orotidine 5'-phosphate decarboxylase (208 aa).

Substrate contacts are provided by residues Asp-7, Lys-29, 57–66, Ser-109, 162–172, Gly-185, and Arg-186; these read DLKLADIPNT and PGIGAQGGKAK. Lys-59 functions as the Proton donor in the catalytic mechanism.

This sequence belongs to the OMP decarboxylase family. Type 1 subfamily. As to quaternary structure, homodimer.

The enzyme catalyses orotidine 5'-phosphate + H(+) = UMP + CO2. The protein operates within pyrimidine metabolism; UMP biosynthesis via de novo pathway; UMP from orotate: step 2/2. Catalyzes the decarboxylation of orotidine 5'-monophosphate (OMP) to uridine 5'-monophosphate (UMP). The polypeptide is Orotidine 5'-phosphate decarboxylase (Pyrococcus abyssi (strain GE5 / Orsay)).